Consider the following 451-residue polypeptide: DNA-directed RNA polymerase subunit Rpo1C (451 aa).

The interval 1–68 (MQDIIGKIED…DDDELLDAVE (68 aa)) is unknown. Residues 69–451 (DDYQRILKVQ…SVSVVMKERK (383 aa)) form a DNA-directed RNA polymerase subunit Rpo1C region.

This sequence belongs to the RNA polymerase beta' chain family. In terms of assembly, part of the RNA polymerase complex.

The protein resides in the cytoplasm. The enzyme catalyses RNA(n) + a ribonucleoside 5'-triphosphate = RNA(n+1) + diphosphate. DNA-dependent RNA polymerase (RNAP) catalyzes the transcription of DNA into RNA using the four ribonucleoside triphosphates as substrates. Forms part of the jaw domain. This is DNA-directed RNA polymerase subunit Rpo1C from Methanothermobacter thermautotrophicus (strain ATCC 29096 / DSM 1053 / JCM 10044 / NBRC 100330 / Delta H) (Methanobacterium thermoautotrophicum).